The primary structure comprises 345 residues: NADH-quinone oxidoreductase subunit H (345 aa).

The next 8 membrane-spanning stretches (helical) occupy residues 13–33, 84–104, 115–135, 161–181, 190–210, 248–268, 278–298, and 309–329; these read VLII…LLFL, FMLA…VIPF, VAIL…IMGG, IGLI…SAIV, FFSW…ISAL, YIAI…GWLS, IWMV…KAIV, and LGWK…AFAA.

Belongs to the complex I subunit 1 family. NDH-1 is composed of 14 different subunits. Subunits NuoA, H, J, K, L, M, N constitute the membrane sector of the complex.

It is found in the cell inner membrane. The catalysed reaction is a quinone + NADH + 5 H(+)(in) = a quinol + NAD(+) + 4 H(+)(out). Its function is as follows. NDH-1 shuttles electrons from NADH, via FMN and iron-sulfur (Fe-S) centers, to quinones in the respiratory chain. The immediate electron acceptor for the enzyme in this species is believed to be ubiquinone. Couples the redox reaction to proton translocation (for every two electrons transferred, four hydrogen ions are translocated across the cytoplasmic membrane), and thus conserves the redox energy in a proton gradient. This subunit may bind ubiquinone. This chain is NADH-quinone oxidoreductase subunit H, found in Dinoroseobacter shibae (strain DSM 16493 / NCIMB 14021 / DFL 12).